The sequence spans 178 residues: Transcription factor E (178 aa).

In terms of domain architecture, HTH TFE/IIEalpha-type spans 4–88; it reads AEDLFINLAK…YWKPNIDQIN (85 aa).

It belongs to the TFE family. As to quaternary structure, monomer. Interaction with RNA polymerase subunits RpoF and RpoE is necessary for Tfe stimulatory transcription activity. Able to interact with Tbp and RNA polymerase in the absence of DNA promoter. Interacts both with the preinitiation and elongation complexes.

In terms of biological role, transcription factor that plays a role in the activation of archaeal genes transcribed by RNA polymerase. Facilitates transcription initiation by enhancing TATA-box recognition by TATA-box-binding protein (Tbp), and transcription factor B (Tfb) and RNA polymerase recruitment. Not absolutely required for transcription in vitro, but particularly important in cases where Tbp or Tfb function is not optimal. It dynamically alters the nucleic acid-binding properties of RNA polymerases by stabilizing the initiation complex and destabilizing elongation complexes. Seems to translocate with the RNA polymerase following initiation and acts by binding to the non template strand of the transcription bubble in elongation complexes. The protein is Transcription factor E of Saccharolobus islandicus (strain L.S.2.15 / Lassen #1) (Sulfolobus islandicus).